A 78-amino-acid polypeptide reads, in one-letter code: Protein SlyX homolog (78 aa).

Belongs to the SlyX family.

The chain is Protein SlyX homolog from Xanthomonas axonopodis pv. citri (strain 306).